A 466-amino-acid chain; its full sequence is Light-independent protochlorophyllide reductase subunit N (466 aa).

The [4Fe-4S] cluster site is built by cysteine 23, cysteine 48, and cysteine 108.

This sequence belongs to the BchN/ChlN family. As to quaternary structure, protochlorophyllide reductase is composed of three subunits; ChlL, ChlN and ChlB. Forms a heterotetramer of two ChlB and two ChlN subunits. It depends on [4Fe-4S] cluster as a cofactor.

The catalysed reaction is chlorophyllide a + oxidized 2[4Fe-4S]-[ferredoxin] + 2 ADP + 2 phosphate = protochlorophyllide a + reduced 2[4Fe-4S]-[ferredoxin] + 2 ATP + 2 H2O. Its pathway is porphyrin-containing compound metabolism; chlorophyll biosynthesis (light-independent). Component of the dark-operative protochlorophyllide reductase (DPOR) that uses Mg-ATP and reduced ferredoxin to reduce ring D of protochlorophyllide (Pchlide) to form chlorophyllide a (Chlide). This reaction is light-independent. The NB-protein (ChlN-ChlB) is the catalytic component of the complex. The sequence is that of Light-independent protochlorophyllide reductase subunit N from Synechococcus elongatus (strain ATCC 33912 / PCC 7942 / FACHB-805) (Anacystis nidulans R2).